A 560-amino-acid polypeptide reads, in one-letter code: CTP synthase (560 aa).

The segment at 1–272 is amidoligase domain; it reads MSIGDVCSAR…DTQILSHFGM (272 aa). Position 20 (Ser-20) interacts with CTP. Ser-20 serves as a coordination point for UTP. ATP contacts are provided by residues 21–26 and Asp-78; that span reads SLGKGL. Mg(2+)-binding residues include Asp-78 and Glu-146. CTP-binding positions include 153 to 155, 193 to 198, and Lys-229; these read DIE and KTKPTQ. Residues 193–198 and Lys-229 contribute to the UTP site; that span reads KTKPTQ. Residues 297–539 form the Glutamine amidotransferase type-1 domain; the sequence is TIAIIGKYTK…VQNVLQIKQR (243 aa). L-glutamine is bound at residue Gly-356. Cys-383 functions as the Nucleophile; for glutamine hydrolysis in the catalytic mechanism. Residues 384-387, Glu-407, and Arg-467 each bind L-glutamine; that span reads MGMQ. Residues His-512 and Glu-514 contribute to the active site.

It belongs to the CTP synthase family. In terms of assembly, homotetramer.

It catalyses the reaction UTP + L-glutamine + ATP + H2O = CTP + L-glutamate + ADP + phosphate + 2 H(+). The enzyme catalyses L-glutamine + H2O = L-glutamate + NH4(+). The catalysed reaction is UTP + NH4(+) + ATP = CTP + ADP + phosphate + 2 H(+). It functions in the pathway pyrimidine metabolism; CTP biosynthesis via de novo pathway; CTP from UDP: step 2/2. With respect to regulation, allosterically activated by GTP, when glutamine is the substrate; GTP has no effect on the reaction when ammonia is the substrate. The allosteric effector GTP functions by stabilizing the protein conformation that binds the tetrahedral intermediate(s) formed during glutamine hydrolysis. Inhibited by the product CTP, via allosteric rather than competitive inhibition. Functionally, catalyzes the ATP-dependent amination of UTP to CTP with either L-glutamine or ammonia as the source of nitrogen. Regulates intracellular CTP levels through interactions with the four ribonucleotide triphosphates. This Anaplasma marginale (strain Florida) protein is CTP synthase.